A 452-amino-acid polypeptide reads, in one-letter code: Cytoplasmic tRNA 2-thiolation protein 2 (452 aa).

This sequence belongs to the CTU2/NCS2 family.

The protein resides in the cytoplasm. It functions in the pathway tRNA modification; 5-methoxycarbonylmethyl-2-thiouridine-tRNA biosynthesis. Its function is as follows. Plays a central role in 2-thiolation of mcm(5)S(2)U at tRNA wobble positions of tRNA(Lys), tRNA(Glu) and tRNA(Gln). May act by forming a heterodimer with NCS6 that ligates sulfur from thiocarboxylated URM1 onto the uridine of tRNAs at wobble position. Prior mcm(5) tRNA modification by the elongator complex is required for 2-thiolation. May also be involved in protein urmylation. This chain is Cytoplasmic tRNA 2-thiolation protein 2, found in Candida albicans (strain SC5314 / ATCC MYA-2876) (Yeast).